The primary structure comprises 190 residues: Large ribosomal subunit protein bL9 (190 aa).

Belongs to the bacterial ribosomal protein bL9 family.

Binds to the 23S rRNA. The protein is Large ribosomal subunit protein bL9 of Rhodobacter capsulatus (strain ATCC BAA-309 / NBRC 16581 / SB1003).